The sequence spans 354 residues: Regulatory protein RapD (354 aa).

6 TPR repeats span residues 64–105, 107–126, 130–163, 171–204, 211–244, and 321–353; these read FENQ…VKTA, KHAV…IHNT, ADLY…YLHQ, ITCK…TQQL, CHAY…QEFE, and IEAW…FIMR.

The protein belongs to the Rap family.

The protein localises to the cytoplasm. The sequence is that of Regulatory protein RapD (rapD) from Bacillus subtilis (strain 168).